The sequence spans 355 residues: Galactoside 2-alpha-L-fucosyltransferase (355 aa).

At 1–15 the chain is on the cytoplasmic side; sequence MRNVKGLFSYMTKTK. The helical; Signal-anchor for type II membrane protein transmembrane segment at 16–36 threads the bilayer; sequence SFYISIIVIIFIIFIVNRMGP. The Lumenal segment spans residues 37–355; it reads RNYNYKQIGT…MSRNGSIISK (319 aa). Asn92, Asn311, and Asn349 each carry an N-linked (GlcNAc...) asparagine glycan.

Belongs to the glycosyltransferase 11 family. As to expression, expression is restricted to the 20 intestinal cells in larvae and adult.

Its subcellular location is the golgi apparatus. It localises to the golgi stack membrane. Its pathway is protein modification; protein glycosylation. In terms of biological role, selectively catalyzes the addition of fucose in alpha 1-2 linkage to Gal-beta-(1-&gt;4)-Xyl-beta-R, Gal-beta-(1-&gt;6)-GlcNAc-R, Gal-beta-(1-&gt;3)-Gal-beta-(1-&gt;4)-Glc and Gal-beta-(1-&gt;3)-Gal-beta-(1-&gt;4)-Xyl-R acceptors but not Gal-beta-(1-&gt;3)-GlcNAc-beta-(1-&gt;3)-Gal-beta-(1-&gt;4)-Glc. Unlike in mammals, unable to fucosylate Gal-beta-(1-&gt;4)-Glc-beta-R. The sequence is that of Galactoside 2-alpha-L-fucosyltransferase from Caenorhabditis elegans.